The following is a 614-amino-acid chain: MKGLSSLINRKKDRNDSHLDEIENGVNATEFNSIEMEEQGKKSDFDLSHLEYGPGSLIPNDNNEEVPDLLDEAMQDAKEADESERGMPLMTALKTYPKAAAWSLLVSTTLIQEGYDTAILGAFYALPVFQKKYGSLNSNTGDYEISVSWQIGLCLCYMAGEIVGLQVTGPSVDYMGNRYTLIMALFFLAAFIFILYFCKSLGMIAVGQALCGMPWGCFQCLTVSYASEICPLALRYYLTTYSNLCWTFGQLFAAGIMKNSQNKYANSELGYKLPFALQWIWPLPLAVGIFLAPESPWWLVKKGRIDQARRSLERILSGKGPEKELLVSMELDKIKTTIEKEQKMSDEGTYWDCVKDGINRRRTRIACLCWIGQCSCGASLIGYSTYFYEKAGVSTDTAFTFSIIQYCLGIAATFVSWWASKYCGRFDLYAFGLAFQAIMFFIIGGLGCSDTHGAKMGSGALLMVVAFFYNLGIAPVVFCLVSEMPSSRLRTKTIILARNAYNVIQVVVTVLIMYQLNSEKWNWGAKSGFFWGGFCLATLAWAVVDLPETAGRTFIEINELFRLGVPARKFKSTKVDPFAAAKAAAAEINVKDPKEDLETSVVDEGRSTPSVVNK.

Residues 1–48 (MKGLSSLINRKKDRNDSHLDEIENGVNATEFNSIEMEEQGKKSDFDLS) are disordered. Topologically, residues 1-108 (MKGLSSLINR…AAAWSLLVST (108 aa)) are cytoplasmic. Over residues 38-48 (EQGKKSDFDLS) the composition is skewed to basic and acidic residues. Residues 109–129 (TLIQEGYDTAILGAFYALPVF) form a helical membrane-spanning segment. At 130-144 (QKKYGSLNSNTGDYE) the chain is on the extracellular side. Residues 145 to 165 (ISVSWQIGLCLCYMAGEIVGL) traverse the membrane as a helical segment. Residues 166-180 (QVTGPSVDYMGNRYT) are Cytoplasmic-facing. Residues 181 to 201 (LIMALFFLAAFIFILYFCKSL) form a helical membrane-spanning segment. Gly202 is a topological domain (extracellular). The helical transmembrane segment at 203 to 223 (MIAVGQALCGMPWGCFQCLTV) threads the bilayer. The Cytoplasmic portion of the chain corresponds to 224-236 (SYASEICPLALRY). Residues 237-257 (YLTTYSNLCWTFGQLFAAGIM) traverse the membrane as a helical segment. Topologically, residues 258 to 272 (KNSQNKYANSELGYK) are extracellular. The helical transmembrane segment at 273-293 (LPFALQWIWPLPLAVGIFLAP) threads the bilayer. The Cytoplasmic segment spans residues 294–364 (ESPWWLVKKG…KDGINRRRTR (71 aa)). A helical membrane pass occupies residues 365-385 (IACLCWIGQCSCGASLIGYST). Topologically, residues 386-398 (YFYEKAGVSTDTA) are extracellular. The chain crosses the membrane as a helical span at residues 399–419 (FTFSIIQYCLGIAATFVSWWA). At 420-427 (SKYCGRFD) the chain is on the cytoplasmic side. Residues 428–448 (LYAFGLAFQAIMFFIIGGLGC) form a helical membrane-spanning segment. At 449-460 (SDTHGAKMGSGA) the chain is on the extracellular side. A helical membrane pass occupies residues 461 to 481 (LLMVVAFFYNLGIAPVVFCLV). Residues 482–493 (SEMPSSRLRTKT) are Cytoplasmic-facing. A helical membrane pass occupies residues 494–514 (IILARNAYNVIQVVVTVLIMY). Over 515–526 (QLNSEKWNWGAK) the chain is Extracellular. A helical transmembrane segment spans residues 527–547 (SGFFWGGFCLATLAWAVVDLP). Residues 548-614 (ETAGRTFIEI…GRSTPSVVNK (67 aa)) lie on the Cytoplasmic side of the membrane. The interval 594 to 614 (KEDLETSVVDEGRSTPSVVNK) is disordered.

The protein belongs to the major facilitator superfamily. Sugar transporter (TC 2.A.1.1) family.

The protein resides in the membrane. In terms of biological role, transporter for maltose. This Saccharomyces cerevisiae (Baker's yeast) protein is Maltose permease MAL61 (MAL61).